The following is a 108-amino-acid chain: Malonate decarboxylase acyl carrier protein (108 aa).

Serine 35 carries the O-(phosphoribosyl dephospho-coenzyme A)serine modification.

Belongs to the MdcC family. In terms of processing, covalently binds the prosthetic group of malonate decarboxylase.

The protein resides in the cytoplasm. Functionally, subunit of malonate decarboxylase, it is an acyl carrier protein to which acetyl and malonyl thioester residues are bound via a 2'-(5''-phosphoribosyl)-3'-dephospho-CoA prosthetic group and turn over during the catalytic mechanism. This chain is Malonate decarboxylase acyl carrier protein, found in Burkholderia cepacia (Pseudomonas cepacia).